A 375-amino-acid chain; its full sequence is Erythronate-4-phosphate dehydrogenase (375 aa).

Position 49 (S49) interacts with substrate. Positions 150 and 178 each coordinate NAD(+). R211 is an active-site residue. D231 is an NAD(+) binding site. Residue E236 is part of the active site. H253 serves as the catalytic Proton donor. G256 contributes to the NAD(+) binding site.

The protein belongs to the D-isomer specific 2-hydroxyacid dehydrogenase family. PdxB subfamily. As to quaternary structure, homodimer.

It localises to the cytoplasm. It catalyses the reaction 4-phospho-D-erythronate + NAD(+) = (R)-3-hydroxy-2-oxo-4-phosphooxybutanoate + NADH + H(+). It functions in the pathway cofactor biosynthesis; pyridoxine 5'-phosphate biosynthesis; pyridoxine 5'-phosphate from D-erythrose 4-phosphate: step 2/5. In terms of biological role, catalyzes the oxidation of erythronate-4-phosphate to 3-hydroxy-2-oxo-4-phosphonooxybutanoate. This Hydrogenovibrio crunogenus (strain DSM 25203 / XCL-2) (Thiomicrospira crunogena) protein is Erythronate-4-phosphate dehydrogenase.